Consider the following 156-residue polypeptide: Small ribosomal subunit protein uS7 (156 aa).

The protein belongs to the universal ribosomal protein uS7 family. Part of the 30S ribosomal subunit. Contacts proteins S9 and S11.

One of the primary rRNA binding proteins, it binds directly to 16S rRNA where it nucleates assembly of the head domain of the 30S subunit. Is located at the subunit interface close to the decoding center, probably blocks exit of the E-site tRNA. This chain is Small ribosomal subunit protein uS7, found in Acinetobacter baumannii (strain AB307-0294).